Here is a 153-residue protein sequence, read N- to C-terminus: Holo-[acyl-carrier-protein] synthase (153 aa).

Mg(2+) is bound by residues Asp-24 and Glu-78.

This sequence belongs to the P-Pant transferase superfamily. AcpS family. Requires Mg(2+) as cofactor.

Its subcellular location is the cytoplasm. It carries out the reaction apo-[ACP] + CoA = holo-[ACP] + adenosine 3',5'-bisphosphate + H(+). Functionally, transfers the 4'-phosphopantetheine moiety from coenzyme A to a Ser of acyl-carrier-protein. The polypeptide is Holo-[acyl-carrier-protein] synthase (Bordetella pertussis (strain Tohama I / ATCC BAA-589 / NCTC 13251)).